The sequence spans 98 residues: Putative zinc finger protein ORF98b (98 aa).

The segment at 54–77 adopts a C2H2-type zinc-finger fold; it reads GFCPYCHNHYRTFGILANHIMRSH.

In Acidianus convivator (ATV), this protein is Putative zinc finger protein ORF98b.